Here is a 161-residue protein sequence, read N- to C-terminus: UPF0178 protein BSUIS_A1819 (161 aa).

This sequence belongs to the UPF0178 family.

The sequence is that of UPF0178 protein BSUIS_A1819 from Brucella suis (strain ATCC 23445 / NCTC 10510).